The following is a 376-amino-acid chain: Probable allantoicase (376 aa).

The protein belongs to the allantoicase family.

The catalysed reaction is allantoate + H2O = (S)-ureidoglycolate + urea. It participates in nitrogen metabolism; (S)-allantoin degradation; (S)-ureidoglycolate from allantoate (aminidohydrolase route): step 1/1. This Streptomyces coelicolor (strain ATCC BAA-471 / A3(2) / M145) protein is Probable allantoicase.